Here is a 931-residue protein sequence, read N- to C-terminus: Neuropilin-2 (931 aa).

The N-terminal stretch at 1 to 20 (MDMFPLTWVFLALYFSGHEV) is a signal peptide. Residues 21–864 (RSQQDPPCGG…EKSWLYTLDP (844 aa)) are Extracellular-facing. 3 disulfide bridges follow: Cys28/Cys55, Cys83/Cys105, and Cys149/Cys175. CUB domains follow at residues 28 to 142 (CGGR…YEIF) and 149 to 267 (CSKN…YYLI). N-linked (GlcNAc...) asparagine glycans are attached at residues Asn152 and Asn157. 3 residues coordinate Ca(2+): Glu197, Asp211, and Asp252. Cys208 and Cys230 are joined by a disulfide. 2 cysteine pairs are disulfide-bonded: Cys277–Cys427 and Cys434–Cys592. 2 F5/8 type C domains span residues 277–427 (CNVP…LFGC) and 434–592 (CSNM…VLGC). Residues 298 to 310 (TFSDGRWTPQQSR) are compositionally biased toward polar residues. Positions 298-317 (TFSDGRWTPQQSRLHGDDNG) are disordered. The interval 601–621 (VETLGPTVKSEETTTPYPMDE) is disordered. N-linked (GlcNAc...) asparagine glycosylation is present at Asn629. The 161-residue stretch at 642-802 (SGFNCNFDFP…TDVPLENCME (161 aa)) folds into the MAM domain. A disordered region spans residues 819 to 854 (THGGEGYEDEIDDEYEGDWSNSSSSTSGAGDPSSGK). Positions 824 to 835 (GYEDEIDDEYEG) are enriched in acidic residues. Low complexity predominate over residues 836-851 (DWSNSSSSTSGAGDPS). N-linked (GlcNAc...) asparagine glycosylation is present at Asn839. The chain crosses the membrane as a helical span at residues 865-889 (ILITIIAMSSLGVLLGATCAGLLLY). Over 890-931 (CTCSYSGLSSRSCTTLENYNFELYDGLKHKVKINHQKCCSEA) the chain is Cytoplasmic.

Belongs to the neuropilin family. In terms of assembly, heterodimer with NRP1. Binds PLXNB1. In terms of tissue distribution, expressed in developing CNS, PNS and in some nonneural tissues including limb buds, developing bones, muscles, intestinal epithelium, kidney, lung and submandibular gland.

The protein localises to the membrane. Functionally, high affinity receptor for semaphorins 3C, 3F, VEGF-165 and VEGF-145 isoforms of VEGF, and the PLGF-2 isoform of PGF. This is Neuropilin-2 (Nrp2) from Mus musculus (Mouse).